Here is a 1610-residue protein sequence, read N- to C-terminus: E3 ubiquitin-protein ligase listerin (1610 aa).

Basic and acidic residues predominate over residues 1 to 10; sequence MKKKSTDLYG. The segment at 1-20 is disordered; it reads MKKKSTDLYGRKNPGMQSMS. HEAT repeat units follow at residues 110-148, 314-351, 372-408, 409-443, 590-626, 627-664, 736-773, 965-1003, 1119-1156, 1322-1354, 1355-1393, and 1435-1473; these read LKIFVFMSVLSSALQKKLAPWLKFYITPWVMGFFDSDRA, VPMLRLLSNMISNFPNEVHQFANDSKRPLSKLFSNLIT, IGAMQLVPSIESVDELCDAFLETANQEQRFLSTEVYD, CLLNFLSFVYTDSSDPQIKDHVRDRLRTIFTRYFK, SPAFTLLRDILLLLKDYADLSEPWENVANQFTVSFDE, LENIRVLNSLPSLFADGKLRGKISLVKTLVEYYDTAVF, KSLYSLLPVILFSKPEDDGHVAAHFESIFSLLKEKALE, GKMPVLFKRFKNLSSAENTTSFSIFAAQGLTDFLIVVSN, CCFLRFMYYFLPTVFSLSGSYWNSIFDYIKYAMKMSVV, RVYLLVWDLIFYHFEETTYNIKLSIINQLHAMD, LLRPLLNTLVEILNLSYDRPINVDKYPKIDYNLMDYSSA, and FTGYNVSPLLISASLDDVERSIESEDFQSVGDVNVKVNR. The RING-type; atypical zinc-finger motif lies at 1558–1604; that stretch reads CAICYSVLSVERTLPNKRCGTCRHKFHASCLYKWFKSSNSSRCPLCR.

This sequence belongs to the LTN1 family. Component of the ribosome quality control complex (RQC), composed of the E3 ubiquitin ligase rkr1/ltn1, rqc1 and mtr1/rqc2, as well as cdc48 and its ubiquitin-binding cofactors. RQC forms a stable complex with 60S ribosomal subunits.

It is found in the nucleus. The protein resides in the cytoplasm. Its subcellular location is the cytosol. The catalysed reaction is S-ubiquitinyl-[E2 ubiquitin-conjugating enzyme]-L-cysteine + [acceptor protein]-L-lysine = [E2 ubiquitin-conjugating enzyme]-L-cysteine + N(6)-ubiquitinyl-[acceptor protein]-L-lysine.. It functions in the pathway protein modification; protein ubiquitination. Its function is as follows. E3 ubiquitin-protein ligase component of the ribosome quality control complex (RQC), a ribosome-associated complex that mediates ubiquitination and extraction of incompletely synthesized nascent chains for proteasomal degradation. Mediates ubiquitination of proteins derived from mRNAs lacking stop codons (non-stop proteins) and other translation arrest products induced by poly-lysine sequences and tandem rare codons. Ubiquitination leads to cdc48 recruitment for extraction and degradation of the incomplete translation product. May indirectly play a role in chromatin function and transcription. In Schizosaccharomyces pombe (strain 972 / ATCC 24843) (Fission yeast), this protein is E3 ubiquitin-protein ligase listerin.